Reading from the N-terminus, the 305-residue chain is Pseudouridine-5'-phosphate glycosidase (305 aa).

The active-site Proton donor is the Glu-22. Substrate contacts are provided by Lys-84 and Val-104. Position 136 (Asp-136) interacts with Mn(2+). 138–140 provides a ligand contact to substrate; the sequence is SAD. The active-site Nucleophile is the Lys-157.

The protein belongs to the pseudouridine-5'-phosphate glycosidase family. As to quaternary structure, homotrimer. It depends on Mn(2+) as a cofactor.

It carries out the reaction D-ribose 5-phosphate + uracil = psi-UMP + H2O. In terms of biological role, catalyzes the reversible cleavage of pseudouridine 5'-phosphate (PsiMP) to ribose 5-phosphate and uracil. Functions biologically in the cleavage direction, as part of a pseudouridine degradation pathway. The chain is Pseudouridine-5'-phosphate glycosidase from Chloroflexus aurantiacus (strain ATCC 29364 / DSM 637 / Y-400-fl).